The chain runs to 57 residues: Small ribosomal subunit protein bS21B (57 aa).

The disordered stretch occupies residues 37–57 (RYEKPSARRKRKAEAARKRRR). Positions 43–57 (ARRKRKAEAARKRRR) are enriched in basic residues.

Belongs to the bacterial ribosomal protein bS21 family.

This is Small ribosomal subunit protein bS21B from Gloeobacter violaceus (strain ATCC 29082 / PCC 7421).